A 71-amino-acid chain; its full sequence is Protein SlyX homolog (71 aa).

Belongs to the SlyX family.

The sequence is that of Protein SlyX homolog from Azotobacter vinelandii (strain DJ / ATCC BAA-1303).